The chain runs to 142 residues: Large ribosomal subunit protein uL11 (142 aa).

This sequence belongs to the universal ribosomal protein uL11 family. In terms of assembly, part of the ribosomal stalk of the 50S ribosomal subunit. Interacts with L10 and the large rRNA to form the base of the stalk. L10 forms an elongated spine to which L12 dimers bind in a sequential fashion forming a multimeric L10(L12)X complex. Post-translationally, one or more lysine residues are methylated.

In terms of biological role, forms part of the ribosomal stalk which helps the ribosome interact with GTP-bound translation factors. The protein is Large ribosomal subunit protein uL11 of Dichelobacter nodosus (strain VCS1703A).